Reading from the N-terminus, the 305-residue chain is Superkiller complex protein 8 (305 aa).

N-acetylmethionine is present on Met-1. An N-acetylthreonine; in WD repeat-containing protein 61, N-terminally processed modification is found at Thr-2. WD repeat units lie at residues 14–57, 62–101, 104–143, 146–187, 188–227, 230–269, and 272–305; these read AHDD…LDLQ, GHQL…QIKS, AGPV…KEYS, TRGK…HTLE, GHAM…LAGT, GHAS…CVHT, and DHQD…DCPI.

The protein belongs to the SKI8 family. In terms of assembly, component of the PAF1 complex, which consists of CDC73, PAF1, LEO1, CTR9, RTF1 and SKIC8. The PAF1 complex interacts with PHF5A. Within the PAF1 complex interacts directly with PHF5A. Component of the SKI complex which consists of SKIC2, SKIC3 and SKIC8.

The protein resides in the nucleus. It is found in the cytoplasm. Its function is as follows. Component of the PAF1 complex (PAF1C) which has multiple functions during transcription by RNA polymerase II and is implicated in regulation of development and maintenance of embryonic stem cell pluripotency. PAF1C associates with RNA polymerase II through interaction with POLR2A CTD non-phosphorylated and 'Ser-2'- and 'Ser-5'-phosphorylated forms and is involved in transcriptional elongation, acting both independently and synergistically with TCEA1 and in cooperation with the DSIF complex and HTATSF1. PAF1C is required for transcription of Hox and Wnt target genes. PAF1C is involved in hematopoiesis and stimulates transcriptional activity of KMT2A/MLL1; it promotes leukemogenesis through association with KMT2A/MLL1-rearranged oncoproteins, such as KMT2A/MLL1-MLLT3/AF9 and KMT2A/MLL1-MLLT1/ENL. PAF1C is involved in histone modifications such as ubiquitination of histone H2B and methylation on histone H3 'Lys-4' (H3K4me3). PAF1C recruits the RNF20/40 E3 ubiquitin-protein ligase complex and the E2 enzyme UBE2A or UBE2B to chromatin which mediate monoubiquitination of 'Lys-120' of histone H2B (H2BK120ub1); UB2A/B-mediated H2B ubiquitination is proposed to be coupled to transcription. PAF1C is involved in mRNA 3' end formation probably through association with cleavage and poly(A) factors. In case of infection by influenza A strain H3N2, PAF1C associates with viral NS1 protein, thereby regulating gene transcription. Required for mono- and trimethylation on histone H3 'Lys-4' (H3K4me3), dimethylation on histone H3 'Lys-79' (H3K4me3). Required for Hox gene transcription. Also acts as a component of the SKI complex, a multiprotein complex that assists the RNA-degrading exosome during the mRNA decay and quality-control pathways. The SKI complex catalyzes mRNA extraction from 80S ribosomal complexes in the 3'-5' direction and channels mRNA to the cytosolic exosome for degradation. SKI-mediated extraction of mRNA from stalled ribosomes allow binding of the Pelota-HBS1L complex and subsequent ribosome disassembly by ABCE1 for ribosome recycling. The protein is Superkiller complex protein 8 of Homo sapiens (Human).